The chain runs to 486 residues: Alliin lyase 1 (486 aa).

Residues 1 to 28 form the signal peptide; sequence MVESYKKIGSCNKMPCLVILTCIIMSNS. The propeptide occupies 29–38; the sequence is LVNNNNMVQA. The region spanning 51-97 is the EGF-like; atypical domain; the sequence is EAVANINCSEHGRAFLDGIISEGSPKCECNTCYTGPDCSEKIQGCSA. A glycan (N-linked (GlcNAc...) asparagine) is linked at Asn-57. 3 disulfide bridges follow: Cys-58–Cys-77, Cys-79–Cys-88, and Cys-82–Cys-95. Residue 130 to 138 coordinates chloride; the sequence is YFFNPVSNF. Residues Asn-184 and Asn-229 are each glycosylated (N-linked (GlcNAc...) asparagine). Lys-289 carries the post-translational modification N6-(pyridoxal phosphate)lysine. The N-linked (GlcNAc...) asparagine glycan is linked to Asn-366. Cys-406 and Cys-414 form a disulfide bridge.

The protein belongs to the alliinase family. Homodimer. Requires pyridoxal 5'-phosphate as cofactor. As to expression, expressed in bulb (at protein level). Expressed in shoots.

Its subcellular location is the vacuole. It carries out the reaction an S-alkyl-L-cysteine S-oxide = an S-alkyl sulfenate + 2-aminoprop-2-enoate. Functionally, able to cleave the C-S bond of sulfoxide derivatives of Cys to produce allicin, thus giving rise to all sulfur compounds which are responsible for most of the properties of garlic, such as the specific smell and flavor as well as the health benefits like blood lipid or blood pressure lowering. This chain is Alliin lyase 1, found in Allium sativum (Garlic).